Here is a 335-residue protein sequence, read N- to C-terminus: Probable tRNA N6-adenosine threonylcarbamoyltransferase (335 aa).

The a divalent metal cation site is built by His-109, His-113, and Tyr-130. Residues 130–134, Asp-162, Gly-177, Glu-181, and Asn-266 contribute to the substrate site; that span reads YVSGG. An a divalent metal cation-binding site is contributed by Asp-294.

This sequence belongs to the KAE1 / TsaD family. Component of the EKC/KEOPS complex; the whole complex dimerizes. Requires a divalent metal cation as cofactor.

Its subcellular location is the cytoplasm. It localises to the nucleus. It carries out the reaction L-threonylcarbamoyladenylate + adenosine(37) in tRNA = N(6)-L-threonylcarbamoyladenosine(37) in tRNA + AMP + H(+). Functionally, component of the EKC/KEOPS complex that is required for the formation of a threonylcarbamoyl group on adenosine at position 37 (t(6)A37) in tRNAs that read codons beginning with adenine. The complex is probably involved in the transfer of the threonylcarbamoyl moiety of threonylcarbamoyl-AMP (TC-AMP) to the N6 group of A37. Osgep likely plays a direct catalytic role in this reaction, but requires other protein(s) of the complex to fulfill this activity. The protein is Probable tRNA N6-adenosine threonylcarbamoyltransferase of Nematostella vectensis (Starlet sea anemone).